The following is a 277-amino-acid chain: Type II restriction enzyme RsrI (277 aa).

The protein belongs to the EcoRI type II restriction endonuclease family. As to quaternary structure, homodimer. It depends on Mg(2+) as a cofactor.

The enzyme catalyses Endonucleolytic cleavage of DNA to give specific double-stranded fragments with terminal 5'-phosphates.. Its function is as follows. A P subtype restriction enzyme that recognizes the double-stranded sequence 5'-GAATTC-3' and cleaves after G-1. The polypeptide is Type II restriction enzyme RsrI (rsrIR) (Cereibacter sphaeroides (Rhodobacter sphaeroides)).